A 657-amino-acid polypeptide reads, in one-letter code: Methionine--tRNA ligase (657 aa).

The short motif at 13–23 is the 'HIGH' region element; sequence YYPSGNLHIGH. A 'KMSKS' region motif is present at residues 308–312; the sequence is KMSKS. Lysine 311 contacts ATP. A tRNA-binding domain is found at 557–657; it reads DFDKVEIKAA…SAIPNGAVIK (101 aa).

The protein belongs to the class-I aminoacyl-tRNA synthetase family. MetG type 2B subfamily. Homodimer.

It localises to the cytoplasm. The catalysed reaction is tRNA(Met) + L-methionine + ATP = L-methionyl-tRNA(Met) + AMP + diphosphate. In terms of biological role, is required not only for elongation of protein synthesis but also for the initiation of all mRNA translation through initiator tRNA(fMet) aminoacylation. The chain is Methionine--tRNA ligase from Staphylococcus aureus (strain Mu50 / ATCC 700699).